Reading from the N-terminus, the 261-residue chain is Acidic leucine-rich nuclear phosphoprotein 32 family member A (261 aa).

4 LRR repeats span residues 16 to 37 (QITE…TDEY), 39 to 60 (ALES…PKLP), 61 to 83 (NLKK…TTSP), and 84 to 105 (KLQY…KPLE). The 39-residue stretch at 118-156 (NDATQVDNYREKIFKMLPSLNFLDGFDCNDEEVQSDGDD) folds into the LRRCT domain. Acidic residues-rich tracts occupy residues 145–185 (CNDE…EEAN) and 194–229 (YNDD…DGDA). The segment at 145–261 (CNDEEVQSDG…VRGKKRKHDG (117 aa)) is disordered. Positions 238-252 (AKDKDGEKEADESQV) are enriched in basic and acidic residues.

This sequence belongs to the ANP32 family. Post-translationally, phosphorylated on serine residues.

It is found in the nucleus. Its subcellular location is the cytoplasm. Implicated in a number of cellular processes, including proliferation, differentiation, caspase-dependent and caspase-independent apoptosis, suppression of transformation (tumor suppressor), inhibition of protein phosphatase 2A, regulation of mRNA trafficking and stability, and inhibition of acetyltransferases as part of the INHAT (inhibitor of histone acetyltransferases) complex. In Drosophila melanogaster (Fruit fly), this protein is Acidic leucine-rich nuclear phosphoprotein 32 family member A (Anp32a).